Reading from the N-terminus, the 953-residue chain is MTSATSPIILKWDPKSLEIRTLTVERLLEPLVTQVTTLVNTSNKGPSGKKKGRSKKAHVLAASVEQATQNFLEKGEQIAKESQDLKEELVAAVEDVRKQGETMRIASSEFADDPCSSVKRGTMVRAARALLSAVTRLLILADMADVMRLLSHLKIVEEALEAVKNATNEQDLANRFKEFGKEMVKLNYVAARRQQELKDPHCRDEMAAARGALKKNATMLYTASQAFLRHPDVAATRANRDYVFKQVQEAIAGISSAAQATSPTDEAKGHTGIGELAAALNEFDNKIILDPMTFSEARFRPSLEERLESIISGAALMADSSCTRDDRRERIVAECNAVRQALQDLLSEYMNNTGRKEKGDPLNIAIDKMTKKTRDLRRQLRKAVMDHISDSFLETNVPLLVLIEAAKSGNEKEVKEYAQVFREHANKLVEVANLACSISNNEEGVKLVRMAATQIDSLCPQVINAALTLAARPQSKVAQDNMDVFKDQWEKQVRVLTEAVDDITSVDDFLSVSENHILEDVNKCVIALQEGDVDTLDRTAGAIRGRAARVIHIINAEMENYEAGVYTEKVLEATKLLSETVMPRFAEQVEVAIEALSANVPQPFEENEFIDASRLVYDGVRDIRKAVLMIRTPEELEDDSDFEQEDYDVRSRTSVQTEDDQLIAGQSARAIMAQLPQEEKAKIAEQVEIFHQEKSKLDAEVAKWDDSGNDIIVLAKQMCMIMMEMTDFTRGKGPLKNTSDVINAAKKIAEAGSRMDKLARAVADQCPDSACKQDLLAYLQRIALYCHQLNICSKVKAEVQNLGGELIVSGTGVQSTFTTFYEVDCDVIDGGRASQLSTHLPTCAEGAPIGSGSSDSSMLDSATSLIQAAKNLMNAVVLTVKASYVASTKYQKVYGTAAVNSPVVSWKMKAPEKKPLVKREKPEEFQTRVRRGSQKKHISPVQALSEFKAMDSF.

Thr-632 carries the phosphothreonine modification. Ser-640, Ser-651, and Ser-901 each carry phosphoserine. Basic and acidic residues predominate over residues 912–927 (EKKPLVKREKPEEFQT). A disordered region spans residues 912 to 939 (EKKPLVKREKPEEFQTRVRRGSQKKHIS). Over residues 928-938 (RVRRGSQKKHI) the composition is skewed to basic residues. Ser-939 carries the phosphoserine modification.

Belongs to the vinculin/alpha-catenin family. In terms of assembly, interacts with CDH1 and CDH2. Interacts with ZNF639; recruits CTNNA2 to the nucleus. Interacts with F-actin. In terms of tissue distribution, expressed almost exclusively in the nervous system.

Its subcellular location is the cell membrane. The protein localises to the cytoplasm. It localises to the cytoskeleton. It is found in the cell junction. The protein resides in the adherens junction. Its subcellular location is the cell projection. The protein localises to the axon. It localises to the nucleus. May function as a linker between cadherin adhesion receptors and the cytoskeleton to regulate cell-cell adhesion and differentiation in the nervous system. Required for proper regulation of cortical neuronal migration and neurite growth. It acts as a negative regulator of Arp2/3 complex activity and Arp2/3-mediated actin polymerization. It thereby suppresses excessive actin branching which would impair neurite growth and stability. Regulates morphological plasticity of synapses and cerebellar and hippocampal lamination during development. Functions in the control of startle modulation. The sequence is that of Catenin alpha-2 (Ctnna2) from Mus musculus (Mouse).